We begin with the raw amino-acid sequence, 769 residues long: Gephyrin (769 aa).

The tract at residues 14–153 (QIRVGVLTVS…LPGSKKGSQE (140 aa)) is MPT Mo-transferase. Positions 140–349 (LIINLPGSKK…VDITKVARRH (210 aa)) are interaction with GABARAP. Disordered regions lie at residues 181–232 (DELE…DSSS) and 260–299 (TASL…SKGV). Residues 187-199 (PSPPPPLSPPPTT) show a composition bias toward pro residues. A phosphoserine mark is found at serine 188 and serine 194. Threonine 198 is modified (phosphothreonine). The residue at position 200 (serine 200) is a Phosphoserine. A lipid anchor (S-palmitoyl cysteine) is attached at cysteine 212. Polar residues predominate over residues 261 to 286 (ASLSTTPSESPRAQATSRLSTASCPT). Serine 262 is modified (phosphoserine). Phosphothreonine is present on residues threonine 265 and threonine 266. Phosphoserine occurs at positions 268 and 270. Residue cysteine 284 is the site of S-palmitoyl cysteine attachment. Residues 327–769 (SSKENILRAS…VVDVMVIGRL (443 aa)) are MPT adenylyltransferase. Serine 338 carries the post-translational modification Phosphoserine.

The protein in the N-terminal section; belongs to the MoaB/Mog family. This sequence in the C-terminal section; belongs to the MoeA family. Homotrimer, homodimer and homooligomer. Interacts with SRGAP2 (via SH3 domain). Interacts with GLRB. Interacts with GABARAP. Interacts with GABRA3. GABRA3 and GLRB occupy overlapping binding sites. Interacts with ARHGAP32; IQSEC3, INSYN1 and INSYN2A. Requires Mg(2+) as cofactor. Palmitoylated. Palmitoylation is stimulated by GABA type A receptors activity. Palmitoylation by ZDHHC12 regulates clustering at synapses.

The protein resides in the postsynaptic cell membrane. Its subcellular location is the cell membrane. The protein localises to the cytoplasm. It localises to the cytosol. It is found in the cytoskeleton. The protein resides in the cell projection. Its subcellular location is the dendrite. The protein localises to the postsynaptic density. The enzyme catalyses molybdopterin + ATP + H(+) = adenylyl-molybdopterin + diphosphate. It catalyses the reaction adenylyl-molybdopterin + molybdate = Mo-molybdopterin + AMP + H(+). It participates in cofactor biosynthesis; molybdopterin biosynthesis. Inhibited by copper and tungsten. Its function is as follows. Microtubule-associated protein involved in membrane protein-cytoskeleton interactions. It is thought to anchor the inhibitory glycine receptor (GLYR) to subsynaptic microtubules. Acts as a major instructive molecule at inhibitory synapses, where it also clusters GABA type A receptors. In terms of biological role, also has a catalytic activity and catalyzes two steps in the biosynthesis of the molybdenum cofactor. In the first step, molybdopterin is adenylated. Subsequently, molybdate is inserted into adenylated molybdopterin and AMP is released. In Mus musculus (Mouse), this protein is Gephyrin (Gphn).